The following is a 514-amino-acid chain: Pantetheinase (514 aa).

Residues 1–22 (MITSRLLVYVAVLVLCVIKVSS) form the signal peptide. N-linked (GlcNAc...) asparagine glycosylation occurs at N39. The 268-residue stretch at 40 to 307 (ATLVPVSHEE…GKLLLSQLDS (268 aa)) folds into the CN hydrolase domain. E80 (proton acceptor) is an active-site residue. Residues N87 and N147 are each glycosylated (N-linked (GlcNAc...) asparagine). K179 (proton donor) is an active-site residue. Residue C212 is the Nucleophile of the active site. Residues N316 and N354 are each glycosylated (N-linked (GlcNAc...) asparagine). D492 carries the GPI-anchor amidated aspartate lipid modification. Positions 493–514 (PRSQVPGVMLLVIIPIVCSLSW) are cleaved as a propeptide — removed in mature form.

The protein belongs to the carbon-nitrogen hydrolase superfamily. BTD/VNN family. In terms of assembly, monomer.

Its subcellular location is the cell membrane. The catalysed reaction is (R)-pantetheine + H2O = cysteamine + (R)-pantothenate. Functionally, amidohydrolase that hydrolyzes specifically one of the carboamide linkages in D-pantetheine thus recycling pantothenic acid (vitamin B5) and releasing cysteamine. The protein is Pantetheinase (VNN1) of Canis lupus familiaris (Dog).